We begin with the raw amino-acid sequence, 556 residues long: DNA ligase B (556 aa).

Lysine 122 acts as the N6-AMP-lysine intermediate in catalysis.

This sequence belongs to the NAD-dependent DNA ligase family. LigB subfamily.

It carries out the reaction NAD(+) + (deoxyribonucleotide)n-3'-hydroxyl + 5'-phospho-(deoxyribonucleotide)m = (deoxyribonucleotide)n+m + AMP + beta-nicotinamide D-nucleotide.. Its function is as follows. Catalyzes the formation of phosphodiester linkages between 5'-phosphoryl and 3'-hydroxyl groups in double-stranded DNA using NAD as a coenzyme and as the energy source for the reaction. The protein is DNA ligase B of Enterobacter sp. (strain 638).